The following is a 380-amino-acid chain: Flap endonuclease 1 (380 aa).

Residues 1–104 form an N-domain region; the sequence is MGIQGLAKLI…GELAKRSERR (104 aa). A Symmetric dimethylarginine; by PRMT5 modification is found at arginine 19. Aspartate 34 provides a ligand contact to Mg(2+). DNA-binding residues include arginine 47 and arginine 70. Lysine 80 carries the post-translational modification N6-acetyllysine. Aspartate 86 is a Mg(2+) binding site. A symmetric dimethylarginine; by PRMT5 mark is found at arginine 100 and arginine 104. Positions 122-253 are I-domain; the sequence is EVEKFTKRLV…KRAVDLIQKH (132 aa). Glutamate 158, glutamate 160, aspartate 179, and aspartate 181 together coordinate Mg(2+). Glutamate 158 lines the DNA pocket. Serine 187 bears the Phosphoserine; by CDK2 mark. Arginine 192 bears the Symmetric dimethylarginine; by PRMT5 mark. A Phosphoserine modification is found at serine 197. 2 residues coordinate DNA: glycine 231 and aspartate 233. Aspartate 233 is a Mg(2+) binding site. 3 positions are modified to phosphoserine: serine 255, serine 293, and serine 335. The disordered stretch occupies residues 327 to 380; it reads RLSKSRQGSTQGRLDDFFKVTGSLSSAKRKEPEPKGSTKKKAKTGAAGKFKRGK. At threonine 336 the chain carries Phosphothreonine. The segment at 336-344 is interaction with PCNA; sequence TQGRLDDFF. An N6-acetyllysine modification is found at lysine 354. A compositionally biased stretch (basic residues) spans 363 to 380; sequence STKKKAKTGAAGKFKRGK. The residue at position 364 (threonine 364) is a Phosphothreonine. N6-acetyllysine is present on residues lysine 375, lysine 377, and lysine 380.

The protein belongs to the XPG/RAD2 endonuclease family. FEN1 subfamily. Interacts with PCNA. Three molecules of FEN1 bind to one PCNA trimer with each molecule binding to one PCNA monomer. PCNA stimulates the nuclease activity without altering cleavage specificity. The C-terminal domain binds EP300; can bind simultaneously to both PCNA and EP300. Interacts with DDX11; this interaction is direct and increases flap endonuclease activity of FEN1. Interacts with WDR4; regulating its endonuclease activity. Interacts with POLB. It depends on Mg(2+) as a cofactor. Post-translationally, acetylated by EP300. Acetylation inhibits both endonuclease and exonuclease activity. Acetylation also reduces DNA-binding activity but does not affect interaction with PCNA or EP300. In terms of processing, phosphorylation upon DNA damage induces relocalization to the nuclear plasma. Phosphorylation at Ser-187 by CDK2 occurs during late S-phase and results in dissociation from PCNA. Methylation at Arg-192 by PRMT5 impedes Ser-187 phosphorylation and increases interaction with PCNA.

It localises to the nucleus. The protein localises to the nucleolus. The protein resides in the nucleoplasm. Its subcellular location is the mitochondrion. Functionally, structure-specific nuclease with 5'-flap endonuclease and 5'-3' exonuclease activities involved in DNA replication and repair. During DNA replication, cleaves the 5'-overhanging flap structure that is generated by displacement synthesis when DNA polymerase encounters the 5'-end of a downstream Okazaki fragment. It enters the flap from the 5'-end and then tracks to cleave the flap base, leaving a nick for ligation. Also involved in the long patch base excision repair (LP-BER) pathway, by cleaving within the apurinic/apyrimidinic (AP) site-terminated flap. Acts as a genome stabilization factor that prevents flaps from equilibrating into structures that lead to duplications and deletions. Also possesses 5'-3' exonuclease activity on nicked or gapped double-stranded DNA, and exhibits RNase H activity. Also involved in replication and repair of rDNA and in repairing mitochondrial DNA. The protein is Flap endonuclease 1 of Macaca fascicularis (Crab-eating macaque).